Reading from the N-terminus, the 48-residue chain is Acidic phospholipase A2 (48 aa).

Residues Tyr-27, Gly-29, and Gly-31 each coordinate Ca(2+). Cys-28 and Cys-44 are disulfide-bonded. Residue His-47 is part of the active site. Asp-48 lines the Ca(2+) pocket.

The protein belongs to the phospholipase A2 family. Group II subfamily. D49 sub-subfamily. As to quaternary structure, monomer. The cofactor is Ca(2+). In terms of tissue distribution, expressed by the venom gland.

Its subcellular location is the secreted. It carries out the reaction a 1,2-diacyl-sn-glycero-3-phosphocholine + H2O = a 1-acyl-sn-glycero-3-phosphocholine + a fatty acid + H(+). With respect to regulation, inhibited by EDTA. Inhibited by Ba(2+), Cu(+), Fe(2+) and Zn(2+) ions and, to a lesser extent, by Mn(2+) and Mg(2+) ions. Functionally, snake venom phospholipase A2 (PLA2) that shows myotoxicity and induces paw edema in mice. Exhibits indirect hemolytic activity. Inhibits platelet aggregation induced by ADP and collagen. PLA2 catalyzes the calcium-dependent hydrolysis of the 2-acyl groups in 3-sn-phosphoglycerides. In Bothrops pauloensis (Neuwied's lancehead), this protein is Acidic phospholipase A2.